A 336-amino-acid polypeptide reads, in one-letter code: Anthranilate phosphoribosyltransferase (336 aa).

Residues glycine 79, 82-83 (GD), threonine 87, 89-92 (NIST), 107-115 (KHGNRAMSS), and serine 119 each bind 5-phospho-alpha-D-ribose 1-diphosphate. Residue glycine 79 participates in anthranilate binding. Serine 91 is a Mg(2+) binding site. Asparagine 110 lines the anthranilate pocket. Residue arginine 165 coordinates anthranilate. Aspartate 225 and glutamate 226 together coordinate Mg(2+).

The protein belongs to the anthranilate phosphoribosyltransferase family. In terms of assembly, homodimer. It depends on Mg(2+) as a cofactor.

It carries out the reaction N-(5-phospho-beta-D-ribosyl)anthranilate + diphosphate = 5-phospho-alpha-D-ribose 1-diphosphate + anthranilate. It participates in amino-acid biosynthesis; L-tryptophan biosynthesis; L-tryptophan from chorismate: step 2/5. Catalyzes the transfer of the phosphoribosyl group of 5-phosphorylribose-1-pyrophosphate (PRPP) to anthranilate to yield N-(5'-phosphoribosyl)-anthranilate (PRA). The sequence is that of Anthranilate phosphoribosyltransferase from Dictyoglomus thermophilum (strain ATCC 35947 / DSM 3960 / H-6-12).